Here is a 319-residue protein sequence, read N- to C-terminus: Ornithine carbamoyltransferase (319 aa).

Carbamoyl phosphate contacts are provided by residues 55 to 58, Gln82, Arg106, and 133 to 136; these read STRT and HPCQ. L-ornithine is bound by residues Asn171, Asp234, and 238 to 239; that span reads SM. Residues 274–275 and Arg302 each bind carbamoyl phosphate; that span reads CL.

Belongs to the aspartate/ornithine carbamoyltransferase superfamily. OTCase family.

The protein resides in the cytoplasm. It catalyses the reaction carbamoyl phosphate + L-ornithine = L-citrulline + phosphate + H(+). It participates in amino-acid biosynthesis; L-arginine biosynthesis; L-arginine from L-ornithine and carbamoyl phosphate: step 1/3. Reversibly catalyzes the transfer of the carbamoyl group from carbamoyl phosphate (CP) to the N(epsilon) atom of ornithine (ORN) to produce L-citrulline. The sequence is that of Ornithine carbamoyltransferase (argF) from Corynebacterium glutamicum (strain ATCC 13032 / DSM 20300 / JCM 1318 / BCRC 11384 / CCUG 27702 / LMG 3730 / NBRC 12168 / NCIMB 10025 / NRRL B-2784 / 534).